Reading from the N-terminus, the 155-residue chain is MDSIFSNTQERPRSLHHLSEVLQIPLLDLRLSCVYCKKELTSLELYRFACIELKLVYRNNWPYAVCRVCLLFYSKVRKYRYYKYSVYGATLESITKKQLSDLSIRCYRCQCPLTPEEKQLHCEHKRRFHYIAYAWTGSCLQCWRHTSRQATESTV.

2 zinc fingers span residues 33–69 (CVYC…CRVC) and 106–142 (CYRC…CLQC).

It belongs to the papillomaviridae E6 protein family. In terms of assembly, forms homodimers. Interacts with ubiquitin-protein ligase UBE3A/E6-AP; this interaction stimulates UBE3A ubiquitin activity. Interacts with host TP53 and EP300; this interaction inhibits TP53 activity.

It is found in the host cytoplasm. Its subcellular location is the host nucleus. Plays a major role in the induction and maintenance of cellular transformation. E6 associates with host UBE3A/E6-AP ubiquitin-protein ligase and modulates its activity. Sequesters tumor suppressor TP53 in the host cytoplasm and modulates its activity by interacting with host EP300 that results in the reduction of TP53 acetylation and activation. In turn, apoptosis induced by DNA damage is inhibited. E6 also protects host keratinocytes from apoptosis by mediating the degradation of host BAK1. May also inhibit host immune response. This chain is Protein E6, found in Homo sapiens (Human).